Here is a 99-residue protein sequence, read N- to C-terminus: DNA-directed RNA polymerase subunit omega (99 aa).

It belongs to the RNA polymerase subunit omega family. As to quaternary structure, the RNAP catalytic core consists of 2 alpha, 1 beta, 1 beta' and 1 omega subunit. When a sigma factor is associated with the core the holoenzyme is formed, which can initiate transcription.

The catalysed reaction is RNA(n) + a ribonucleoside 5'-triphosphate = RNA(n+1) + diphosphate. Functionally, promotes RNA polymerase assembly. Latches the N- and C-terminal regions of the beta' subunit thereby facilitating its interaction with the beta and alpha subunits. The protein is DNA-directed RNA polymerase subunit omega (rpoZ) of Deinococcus radiodurans (strain ATCC 13939 / DSM 20539 / JCM 16871 / CCUG 27074 / LMG 4051 / NBRC 15346 / NCIMB 9279 / VKM B-1422 / R1).